The sequence spans 710 residues: PWWP domain-containing DNA repair factor 3A (710 aa).

The interval 106 to 160 (QESSAGTGRADRSLRGKPMEHVSSPCDSNSSSLPRGDVLGSSRPHRRRPCVQQSL) is disordered. Residues 114 to 125 (RADRSLRGKPME) are compositionally biased toward basic and acidic residues. A compositionally biased stretch (low complexity) spans 128-137 (SSPCDSNSSS). Ser161 carries the post-translational modification Phosphoserine. 2 disordered regions span residues 177–204 (KKGL…ESGS) and 230–398 (NGSS…EEPP). Residues 288–297 (PSACSEPGEC) show a composition bias toward low complexity. A phosphoserine mark is found at Ser374 and Ser375. A compositionally biased stretch (polar residues) spans 375–385 (SEESMGSNSMR). The 62-residue stretch at 411 to 472 (VGMLVWHKHK…KHFDCKEKQT (62 aa)) folds into the PWWP domain.

Belongs to the PWWP3A family. Interacts with TP53BP1 (via BRCT domain); the interaction is not dependent on its phosphorylation status. Binds nucleosomes. Interacts with trimethylated 'Lys-36' of histone H3 (H3K36me3) (in vitro).

It localises to the nucleus. Involved in the DNA damage response pathway by contributing to the maintenance of chromatin architecture. Recruited to the vicinity of DNA breaks by TP53BP1 and plays an accessory role to facilitate damage-induced chromatin changes and promoting chromatin relaxation. Required for efficient DNA repair and cell survival following DNA damage. This Homo sapiens (Human) protein is PWWP domain-containing DNA repair factor 3A.